A 131-amino-acid chain; its full sequence is Jacalin-related lectin 15 (131 aa).

The Jacalin-type lectin domain maps to Met-1 to Pro-126.

It belongs to the jacalin lectin family. In terms of tissue distribution, expressed in the vascular and surrounding tissues in cotyledons. Detected in root apical meristems.

This chain is Jacalin-related lectin 15 (JAL15), found in Arabidopsis thaliana (Mouse-ear cress).